Reading from the N-terminus, the 149-residue chain is uncharacterized protein (149 aa).

This is an uncharacterized protein from Schizosaccharomyces pombe (strain 972 / ATCC 24843) (Fission yeast).